The following is a 632-amino-acid chain: Biosynthetic arginine decarboxylase (632 aa).

At Lys-101 the chain carries N6-(pyridoxal phosphate)lysine. 281–291 (FDVGGGLGVDY) provides a ligand contact to substrate.

This sequence belongs to the Orn/Lys/Arg decarboxylase class-II family. SpeA subfamily. Requires Mg(2+) as cofactor. The cofactor is pyridoxal 5'-phosphate.

The catalysed reaction is L-arginine + H(+) = agmatine + CO2. It participates in amine and polyamine biosynthesis; agmatine biosynthesis; agmatine from L-arginine: step 1/1. Functionally, catalyzes the biosynthesis of agmatine from arginine. This Escherichia coli O157:H7 (strain EC4115 / EHEC) protein is Biosynthetic arginine decarboxylase.